Consider the following 215-residue polypeptide: MRGRAGETTMTAALQELAAHIEMKRPDCVISTEIAHDELTVVATPNSIVGLVAFLKTDATCKFSTLIDITAVDYPERAQRFDVVYHFLSMYQNHRIRIRVPVREDDIVPSIISEHPSANWFEREVFDMFGILFSGHPDLRRILTDYGFRGYPLRKDFPTTGYTEVRYDEEKKRVVYEPVNLVQEYRQFDFMSPWEGAEYILPGDEKTDDKAEAKG.

It belongs to the complex I 30 kDa subunit family. In terms of assembly, NDH-1 is composed of 14 different subunits. Subunits NuoB, C, D, E, F, and G constitute the peripheral sector of the complex.

The protein localises to the cell inner membrane. The enzyme catalyses a quinone + NADH + 5 H(+)(in) = a quinol + NAD(+) + 4 H(+)(out). Its function is as follows. NDH-1 shuttles electrons from NADH, via FMN and iron-sulfur (Fe-S) centers, to quinones in the respiratory chain. The immediate electron acceptor for the enzyme in this species is believed to be ubiquinone. Couples the redox reaction to proton translocation (for every two electrons transferred, four hydrogen ions are translocated across the cytoplasmic membrane), and thus conserves the redox energy in a proton gradient. The chain is NADH-quinone oxidoreductase subunit C from Dinoroseobacter shibae (strain DSM 16493 / NCIMB 14021 / DFL 12).